The primary structure comprises 1426 residues: Phospholipid-transporting ATPase VD (1426 aa).

Residues 1 to 97 (MTEALQWARY…PRNLFEQFHR (97 aa)) are Cytoplasmic-facing. The chain crosses the membrane as a helical span at residues 98–118 (AANLYFLFLVVLNWVPLVEAF). Residues 119–121 (QKE) lie on the Exoplasmic loop side of the membrane. The helical transmembrane segment at 122 to 142 (ITMLPLVVVLTIIAIKDGLED) threads the bilayer. At 143 to 321 (YRKYKIDKQI…SKLERRANTD (179 aa)) the chain is on the cytoplasmic side. The helical transmembrane segment at 322-342 (VLWCVMLLVIMCLTGAVGHGI) threads the bilayer. Residues 343–365 (WLSRYEKMHFFNVPEPDGHIISP) are Exoplasmic loop-facing. Residues 366–386 (LLAGFYMFWTMIILLQVLIPI) traverse the membrane as a helical segment. The Cytoplasmic portion of the chain corresponds to 387 to 1113 (SLYVSIEIVK…HWCYTRLSNM (727 aa)). Residue Asp-438 is the 4-aspartylphosphate intermediate of the active site. 3 residues coordinate ATP: Asp-438, Lys-439, and Thr-440. Residue Asp-438 coordinates Mg(2+). Thr-440 provides a ligand contact to Mg(2+). Positions 506-531 (NGPLGNKPSNHLAGSSFTLGSGEGAS) are disordered. The span at 512–524 (KPSNHLAGSSFTL) shows a compositional bias: polar residues. ATP-binding positions include Glu-730, Phe-772, Lys-796, Arg-840, Thr-920, Gly-921, Asp-922, 996–1003 (GLIITGKT), Arg-1030, and Lys-1036. Mg(2+) is bound at residue Asp-1056. ATP-binding residues include Asn-1059 and Asp-1060. Asp-1060 lines the Mg(2+) pocket. The chain crosses the membrane as a helical span at residues 1114–1134 (ILYFFYKNVAYVNLLFWYQFF). The Exoplasmic loop segment spans residues 1135–1145 (CGFSGTSMTDY). A helical transmembrane segment spans residues 1146–1166 (WVLIFFNLLFTSAPPVIYGVL). At 1167–1195 (EKDVSAETLMQLPELYRSGQKSEAYLPHT) the chain is on the cytoplasmic side. The chain crosses the membrane as a helical span at residues 1196 to 1216 (FWITLLDAFYQSLVCFFVPYF). Residues 1217 to 1224 (TYQGSDTD) are Exoplasmic loop-facing. Residues 1225–1245 (IFAFGNPLNTAALFIVLLHLV) traverse the membrane as a helical segment. The Cytoplasmic segment spans residues 1246 to 1252 (IESKSLT). Residues 1253-1273 (WIHLLVIIGSILSYFLFAIVF) form a helical membrane-spanning segment. Over 1274–1292 (GAMCVTCNPPSNPYWIMQE) the chain is Exoplasmic loop. The chain crosses the membrane as a helical span at residues 1293–1313 (HMLDPVFYLVCILTTSIALLP). The Cytoplasmic portion of the chain corresponds to 1314–1426 (RFVYRVLQGS…MAGPSKGKES (113 aa)). Position 1364-1371 (1364-1371 (ANQSAGKS)) interacts with ATP.

The protein belongs to the cation transport ATPase (P-type) (TC 3.A.3) family. Type IV subfamily. As to quaternary structure, component of a P4-ATPase flippase complex which consists of a catalytic alpha subunit ATP10A and an accessory beta subunit TMEM30A. Requires Mg(2+) as cofactor. Post-translationally, autophosphorylated at the conserved aspartate of the P-type ATPase signature sequence. Expressed in placenta and, to a lesser extent, in kidney.

The protein resides in the cell membrane. It localises to the endoplasmic reticulum membrane. It carries out the reaction ATP + H2O + phospholipidSide 1 = ADP + phosphate + phospholipidSide 2.. The enzyme catalyses a beta-D-glucosyl-(1&lt;-&gt;1')-N-acylsphing-4-enine(out) + ATP + H2O = a beta-D-glucosyl-(1&lt;-&gt;1')-N-acylsphing-4-enine(in) + ADP + phosphate + H(+). Functionally, catalytic component of a P4-ATPase flippase complex, which catalyzes the hydrolysis of ATP coupled to the transport of glucosylceramide (GlcCer) from the outer to the inner leaflet of the plasma membrane. This chain is Phospholipid-transporting ATPase VD, found in Homo sapiens (Human).